The chain runs to 155 residues: MRRRRAPKRPVMPDPVYNSEVVTKFINKVMWDGKKTLAERIVYGAIEKLGEKGEEKGIDLFFKAIENVKPLLEVRSRRVGGATYQVPMEVRPERQQTLSIRWIVDAARNRNERTMVERLANELFDAANERGAAFKKREDTHRMAEANKAFAHYRW.

It belongs to the universal ribosomal protein uS7 family. As to quaternary structure, part of the 30S ribosomal subunit. Contacts proteins S9 and S11.

Its function is as follows. One of the primary rRNA binding proteins, it binds directly to 16S rRNA where it nucleates assembly of the head domain of the 30S subunit. Is located at the subunit interface close to the decoding center, probably blocks exit of the E-site tRNA. This Nautilia profundicola (strain ATCC BAA-1463 / DSM 18972 / AmH) protein is Small ribosomal subunit protein uS7.